Here is a 285-residue protein sequence, read N- to C-terminus: HTH-type transcriptional regulator MurR (285 aa).

The HTH rpiR-type domain occupies 1–77 (MLYLTKISNA…MALIGEYSAS (77 aa)). The H-T-H motif DNA-binding region spans 37–56 (SRQMAKQLGISQSSIVKFAQ). One can recognise an SIS domain in the interval 128–279 (IIEVISKAPF…SLKMIQRSSE (152 aa)).

In terms of assembly, homotetramer.

It participates in amino-sugar metabolism; N-acetylmuramate degradation [regulation]. Its function is as follows. Represses the expression of the murPQ operon involved in the uptake and degradation of N-acetylmuramic acid (MurNAc). Binds to two adjacent inverted repeats within the operator region. MurNAc 6-phosphate, the substrate of MurQ, is the specific inducer that weakens binding of MurR to the operator. This is HTH-type transcriptional regulator MurR from Shigella boydii serotype 4 (strain Sb227).